Reading from the N-terminus, the 98-residue chain is Gas vesicle protein J2 (98 aa).

The tract at residues 75 to 98 (AGVDADDSKSVLERPDPPTTEGSE) is disordered. Residues 80-90 (DDSKSVLERPD) show a composition bias toward basic and acidic residues.

This sequence belongs to the gas vesicle GvpA family. GvpF to GvpM interact with each other in vitro, and may form multi-subunit complex(es). Interacts with GvpA.

It is found in the gas vesicle. Its function is as follows. A minor component of the gas vesicle. Proteins GvpF to GvpM might be involved in nucleating gas vesicle formation. Gas vesicles are hollow, gas filled proteinaceous nanostructures found in several microbial planktonic microorganisms. They allow positioning of halobacteria at the optimal depth for growth in the poorly aerated, shallow brine pools of their habitat. Expression of 2 c-vac DNA fragments containing 2 divergently transcribed regions (gvpE-gvpF-gvpG-gvpH-gvpI-gvpJ-gvpK-gvpL-gvpM and gvpA-gvpC-gvpN-gvpO) allows H.volcanii to produce gas vesicles. This chain is Gas vesicle protein J2, found in Halobacterium salinarum (strain ATCC 700922 / JCM 11081 / NRC-1) (Halobacterium halobium).